The following is a 285-amino-acid chain: Probable endonuclease 4 (285 aa).

The Zn(2+) site is built by histidine 69, histidine 109, glutamate 145, aspartate 179, histidine 182, histidine 216, aspartate 229, histidine 231, and glutamate 261.

Belongs to the AP endonuclease 2 family. Zn(2+) serves as cofactor.

The catalysed reaction is Endonucleolytic cleavage to 5'-phosphooligonucleotide end-products.. Endonuclease IV plays a role in DNA repair. It cleaves phosphodiester bonds at apurinic or apyrimidinic (AP) sites, generating a 3'-hydroxyl group and a 5'-terminal sugar phosphate. The polypeptide is Probable endonuclease 4 (Escherichia coli (strain SMS-3-5 / SECEC)).